We begin with the raw amino-acid sequence, 329 residues long: DNA-directed RNA polymerase subunit alpha (329 aa).

Positions 1–235 (MQGSVTEFLK…EQLEAFVDLR (235 aa)) are alpha N-terminal domain (alpha-NTD). Residues 249-329 (FDPILLRPVD…NWPPASIADE (81 aa)) are alpha C-terminal domain (alpha-CTD).

Belongs to the RNA polymerase alpha chain family. Homodimer. The RNAP catalytic core consists of 2 alpha, 1 beta, 1 beta' and 1 omega subunit. When a sigma factor is associated with the core the holoenzyme is formed, which can initiate transcription.

The catalysed reaction is RNA(n) + a ribonucleoside 5'-triphosphate = RNA(n+1) + diphosphate. DNA-dependent RNA polymerase catalyzes the transcription of DNA into RNA using the four ribonucleoside triphosphates as substrates. This is DNA-directed RNA polymerase subunit alpha from Sodalis glossinidius (strain morsitans).